The primary structure comprises 127 residues: uncharacterized protein (127 aa).

Positions 1–24 (PLKTKPIDNNLPHRTGYNQASKQQ) are disordered.

This is an uncharacterized protein from Homo sapiens (Human).